Reading from the N-terminus, the 362-residue chain is Peptide chain release factor 1 (362 aa).

Gln-240 bears the N5-methylglutamine mark.

Belongs to the prokaryotic/mitochondrial release factor family. Post-translationally, methylated by PrmC. Methylation increases the termination efficiency of RF1.

The protein localises to the cytoplasm. Peptide chain release factor 1 directs the termination of translation in response to the peptide chain termination codons UAG and UAA. This chain is Peptide chain release factor 1, found in Bifidobacterium adolescentis (strain ATCC 15703 / DSM 20083 / NCTC 11814 / E194a).